We begin with the raw amino-acid sequence, 395 residues long: Imidazolonepropionase (395 aa).

Fe(3+)-binding residues include H72 and H74. Zn(2+) contacts are provided by H72 and H74. The 4-imidazolone-5-propanoate site is built by R81, Y144, and H174. Residue Y144 coordinates N-formimidoyl-L-glutamate. Fe(3+) is bound at residue H231. H231 is a binding site for Zn(2+). E234 serves as a coordination point for 4-imidazolone-5-propanoate. D306 contacts Fe(3+). Position 306 (D306) interacts with Zn(2+).

Belongs to the metallo-dependent hydrolases superfamily. HutI family. Zn(2+) is required as a cofactor. Requires Fe(3+) as cofactor.

It is found in the cytoplasm. It catalyses the reaction 4-imidazolone-5-propanoate + H2O = N-formimidoyl-L-glutamate. Its pathway is amino-acid degradation; L-histidine degradation into L-glutamate; N-formimidoyl-L-glutamate from L-histidine: step 3/3. Catalyzes the hydrolytic cleavage of the carbon-nitrogen bond in imidazolone-5-propanoate to yield N-formimidoyl-L-glutamate. It is the third step in the universal histidine degradation pathway. In Pyrobaculum arsenaticum (strain DSM 13514 / JCM 11321 / PZ6), this protein is Imidazolonepropionase.